The sequence spans 643 residues: Transmembrane 9 superfamily member 4 (643 aa).

A signal peptide spans 1–23 (MAAAMIWWPRFLLLLCLTCKGST). Over 24-282 (FYVPGVAPIN…TMSDVQIHWF (259 aa)) the chain is Extracellular. Residues 283–303 (SIINSVVVVFFLSGILSMIII) form a helical membrane-spanning segment. The Cytoplasmic portion of the chain corresponds to 304–347 (RTLRKDIANYNKEDDIEDTMEESGWKLVHGDVFRPPQYPMILSS). Y313 carries the phosphotyrosine modification. A helical transmembrane segment spans residues 348 to 368 (LLGSGIQLFCMILIVIFVAML). Topologically, residues 369 to 377 (GMLSPSSRG) are extracellular. Residues 378-398 (ALMTTACFLFMFMGVFGGFSA) form a helical membrane-spanning segment. Residues 399-417 (GRLYRTLKGHRWKKGAFCT) lie on the Cytoplasmic side of the membrane. Residues 418 to 438 (ATLYPGVVFGICFVLNCFIWG) traverse the membrane as a helical segment. Over 439 to 450 (KHSSGAVPFPTM) the chain is Extracellular. A helical transmembrane segment spans residues 451 to 471 (VALLCMWFGISLPLVYLGYYF). Over 472 to 502 (GFRKQPYDNPVRTNQIPRQIPEQRWYMNRFV) the chain is Cytoplasmic. A helical transmembrane segment spans residues 503–523 (GILMAGILPFGAMFIELFFIF). The Extracellular segment spans residues 524–536 (SAIWENQFYYLFG). The chain crosses the membrane as a helical span at residues 537-557 (FLFLVFIILVVSCSQISIVMV). The Cytoplasmic segment spans residues 558–571 (YFQLCAEDYRWWWR). The helical transmembrane segment at 572–592 (NFLVSGGSAFYVLVYAIFYFV) threads the bilayer. Residues 593–599 (NKLDIVE) are Extracellular-facing. Residues 600–620 (FIPSLLYFGYTTLMVLSFWLL) traverse the membrane as a helical segment. Residues 621–643 (TGTIGFYAAYMFVRKIYAAVKID) are Cytoplasmic-facing.

The protein belongs to the nonaspanin (TM9SF) (TC 9.A.2) family.

It localises to the membrane. It is found in the golgi apparatus. Its subcellular location is the early endosome. Associates with proteins harboring glycine-rich transmembrane domains and ensures their efficient localization to the cell surface. This chain is Transmembrane 9 superfamily member 4 (Tm9sf4), found in Rattus norvegicus (Rat).